A 279-amino-acid chain; its full sequence is Biotin synthase (279 aa).

One can recognise a Radical SAM core domain in the interval 2–228 (KTIMLCAICS…ETRVMIAGGR (227 aa)). Residues Cys-17, Cys-21, and Cys-24 each coordinate [4Fe-4S] cluster. Residues Cys-61, Cys-96, Cys-154, and Arg-221 each coordinate [2Fe-2S] cluster.

Belongs to the radical SAM superfamily. Biotin synthase family. As to quaternary structure, homodimer. It depends on [4Fe-4S] cluster as a cofactor. The cofactor is [2Fe-2S] cluster.

The catalysed reaction is (4R,5S)-dethiobiotin + (sulfur carrier)-SH + 2 reduced [2Fe-2S]-[ferredoxin] + 2 S-adenosyl-L-methionine = (sulfur carrier)-H + biotin + 2 5'-deoxyadenosine + 2 L-methionine + 2 oxidized [2Fe-2S]-[ferredoxin]. Its pathway is cofactor biosynthesis; biotin biosynthesis; biotin from 7,8-diaminononanoate: step 2/2. Functionally, catalyzes the conversion of dethiobiotin (DTB) to biotin by the insertion of a sulfur atom into dethiobiotin via a radical-based mechanism. This is Biotin synthase from Campylobacter concisus (strain 13826).